Consider the following 459-residue polypeptide: Ribosomal protein uS12 methylthiotransferase RimO (459 aa).

Residues 1 to 28 are disordered; sequence MSTNPPDLRPDLAPKARLTQPDRPGQPT. The 111-residue stretch at 27–137 folds into the MTTase N-terminal domain; sequence PTIGMVSLGC…VLDAVHAAVP (111 aa). 6 residues coordinate [4Fe-4S] cluster: Cys-36, Cys-72, Cys-101, Cys-168, Cys-172, and Cys-175. The region spanning 154–387 is the Radical SAM core domain; the sequence is LTPRHFSYLK…MAKSQDISEA (234 aa). In terms of domain architecture, TRAM spans 390–457; the sequence is AAKVAQRLEV…EYDLWGRLAP (68 aa).

Belongs to the methylthiotransferase family. RimO subfamily. [4Fe-4S] cluster is required as a cofactor.

It localises to the cytoplasm. The enzyme catalyses L-aspartate(89)-[ribosomal protein uS12]-hydrogen + (sulfur carrier)-SH + AH2 + 2 S-adenosyl-L-methionine = 3-methylsulfanyl-L-aspartate(89)-[ribosomal protein uS12]-hydrogen + (sulfur carrier)-H + 5'-deoxyadenosine + L-methionine + A + S-adenosyl-L-homocysteine + 2 H(+). Catalyzes the methylthiolation of an aspartic acid residue of ribosomal protein uS12. This is Ribosomal protein uS12 methylthiotransferase RimO from Roseobacter denitrificans (strain ATCC 33942 / OCh 114) (Erythrobacter sp. (strain OCh 114)).